Consider the following 231-residue polypeptide: Two-component response regulator ORR1 (231 aa).

The 127-residue stretch at 9–135 (RVLLVDDSPV…DVQRLRKCSP (127 aa)) folds into the Response regulatory domain. Aspartate 68 carries the 4-aspartylphosphate modification.

It belongs to the ARR family. Type-A subfamily. Post-translationally, two-component system major event consists of a His-to-Asp phosphorelay between a sensor histidine kinase (HK) and a response regulator (RR). In plants, the His-to-Asp phosphorelay involves an additional intermediate named Histidine-containing phosphotransfer protein (HPt). This multistep phosphorelay consists of a His-Asp-His-Asp sequential transfer of a phosphate group between first a His and an Asp of the HK protein, followed by the transfer to a conserved His of the HPt protein and finally the transfer to an Asp in the receiver domain of the RR protein. As to expression, expressed in mature leaves and flowers, and at low levels in roots and shoots.

Functions as a response regulator involved in His-to-Asp phosphorelay signal transduction system. Phosphorylation of the Asp residue in the receiver domain activates the ability of the protein to promote the transcription of target genes. Type-A response regulators seem to act as negative regulators of the cytokinin signaling. The chain is Two-component response regulator ORR1 from Oryza sativa subsp. indica (Rice).